We begin with the raw amino-acid sequence, 68 residues long: DNA gyrase inhibitor YacG (68 aa).

Zn(2+) contacts are provided by cysteine 14, cysteine 17, cysteine 29, and cysteine 33.

Belongs to the DNA gyrase inhibitor YacG family. Interacts with GyrB. Requires Zn(2+) as cofactor.

Inhibits all the catalytic activities of DNA gyrase by preventing its interaction with DNA. Acts by binding directly to the C-terminal domain of GyrB, which probably disrupts DNA binding by the gyrase. This chain is DNA gyrase inhibitor YacG, found in Azorhizobium caulinodans (strain ATCC 43989 / DSM 5975 / JCM 20966 / LMG 6465 / NBRC 14845 / NCIMB 13405 / ORS 571).